Consider the following 277-residue polypeptide: Methyltransferase adrK (277 aa).

Residues 123–124, 150–151, and 151–152 each bind S-adenosyl-L-methionine; these read DL, DV, and VL.

This sequence belongs to the class I-like SAM-binding methyltransferase superfamily. In terms of assembly, homodimer.

It participates in secondary metabolite biosynthesis; terpenoid biosynthesis. Its function is as follows. Methyltransferase; part of the gene cluster that mediates the biosynthesis of andrastins, meroterpenoid compounds that exhibit inhibitory activity against ras farnesyltransferase, suggesting that they could be promising leads for antitumor agents. The first step of the pathway is the synthesis of 3,5-dimethylorsellinic acid (DMOA) by the polyketide synthase adrD via condensation of one acetyl-CoA starter unit with 3 malonyl-CoA units and 2 methylations. DMAO is then converted to farnesyl-DMAO by the prenyltransferase adrG. The methyltransferase adrK catalyzes the methylation of the carboxyl group of farnesyl-DMAO to farnesyl-DMAO methyl ester which is further converted to epoxyfarnesyl-DMAO methyl ester by the FAD-dependent monooxygenase adrH. The terpene cyclase adrI then catalyzes the carbon skeletal rearrangement to generate the andrastin E, the first compound in the pathway having the andrastin scaffold, with the tetracyclic ring system. The post-cyclization tailoring enzymes adrF, adrE, adrJ, and adrA, are involved in the conversion of andrastin E into andrastin A. The short chain dehydrogenase adrF is responsible for the oxidation of the C-3 a hydroxyl group of andrastin E to yield the corresponding ketone, andrastin D. The ketoreductase adrE stereoselectively reduces the carbonyl moiety to reverse the stereochemistry of the C-3 position to yield andrastin F. The acetyltransferase adrJ is the acetyltransferase that attaches the acetyl group to the C-3 hydroxyl group of andrastin F to yield andrastin C. Finally, the cytochrome P450 monooxygenase adrA catalyzes two sequential oxidation reactions of the C-23 methyl group, to generate the corresponding alcohol andrastin B, and aldehyde andrastin A. This Penicillium rubens (strain ATCC 28089 / DSM 1075 / NRRL 1951 / Wisconsin 54-1255) (Penicillium chrysogenum) protein is Methyltransferase adrK.